Here is a 164-residue protein sequence, read N- to C-terminus: Pathogenesis-related protein PRB1-2 (164 aa).

The N-terminal stretch at 1 to 24 (MQTPKLAILLALAMAAAMVNLSQA) is a signal peptide. Pyrrolidone carboxylic acid is present on Gln25. An SCP domain is found at 34–152 (PHNAARSAVG…NRGVFITCNY (119 aa)). 3 cysteine pairs are disulfide-bonded: Cys68-Cys140, Cys113-Cys119, and Cys135-Cys150.

This sequence belongs to the CRISP family.

In terms of biological role, probably involved in the defense reaction of plants against pathogens. In Hordeum vulgare (Barley), this protein is Pathogenesis-related protein PRB1-2.